We begin with the raw amino-acid sequence, 61 residues long: Alpha-conotoxin EIIA (61 aa).

The signal sequence occupies residues 1–16 (MFIVFLLVVLATTVGS). The propeptide occupies 17–40 (FTLDRVLEGRNAAAIDNALDQRDP). At Gln43 the chain carries Pyrrolidone carboxylic acid. Residue Pro45 is modified to Hydroxyproline. 2 disulfide bridges follow: Cys47-Cys53 and Cys48-Cys58. Cys58 carries the cysteine amide modification.

Belongs to the conotoxin A superfamily. As to expression, expressed by the venom duct.

The protein resides in the secreted. Functionally, alpha-conotoxins bind to the nicotinic acetylcholine receptors (nAChR) and inhibit them. This peptide potently blocks muscular nicotinic acetylcholine receptor (CHRNA1-CHRNB1-CHRNG-CHRND), and has no effect on neuronal receptors. It is able to totally displace [125I]-Bgtx from the Torpedo receptor with a complete inhibition in the high micromolar range. It produces a biphasic inhibition curve which fits nicely with a two-site model (Ki of 0.46 and 105 nM). The sequence is that of Alpha-conotoxin EIIA from Conus ermineus (Agate cone).